A 753-amino-acid polypeptide reads, in one-letter code: 5-methyltetrahydropteroyltriglutamate--homocysteine methyltransferase (753 aa).

Residues 17-20 (RELK) and lysine 117 each bind 5-methyltetrahydropteroyltri-L-glutamate. L-homocysteine contacts are provided by residues 431-433 (IGS) and glutamate 484. Residues 431–433 (IGS) and glutamate 484 contribute to the L-methionine site. 5-methyltetrahydropteroyltri-L-glutamate is bound by residues 515–516 (RC) and tryptophan 561. An L-homocysteine-binding site is contributed by aspartate 599. Aspartate 599 is a binding site for L-methionine. 5-methyltetrahydropteroyltri-L-glutamate is bound at residue glutamate 605. Zn(2+)-binding residues include histidine 641, cysteine 643, and glutamate 665. Histidine 694 serves as the catalytic Proton donor. Residue cysteine 726 participates in Zn(2+) binding.

Belongs to the vitamin-B12 independent methionine synthase family. It depends on Zn(2+) as a cofactor.

It catalyses the reaction 5-methyltetrahydropteroyltri-L-glutamate + L-homocysteine = tetrahydropteroyltri-L-glutamate + L-methionine. It functions in the pathway amino-acid biosynthesis; L-methionine biosynthesis via de novo pathway; L-methionine from L-homocysteine (MetE route): step 1/1. Catalyzes the transfer of a methyl group from 5-methyltetrahydrofolate to homocysteine resulting in methionine formation. The protein is 5-methyltetrahydropteroyltriglutamate--homocysteine methyltransferase of Shigella boydii serotype 4 (strain Sb227).